Here is a 357-residue protein sequence, read N- to C-terminus: Methylthioribose-1-phosphate isomerase (357 aa).

Substrate contacts are provided by residues 49 to 51, Arg-89, and Gln-197; that span reads RGA. The active-site Proton donor is Asp-238. 248–249 provides a ligand contact to substrate; it reads NK.

The protein belongs to the eIF-2B alpha/beta/delta subunits family. MtnA subfamily.

The enzyme catalyses 5-(methylsulfanyl)-alpha-D-ribose 1-phosphate = 5-(methylsulfanyl)-D-ribulose 1-phosphate. It functions in the pathway amino-acid biosynthesis; L-methionine biosynthesis via salvage pathway; L-methionine from S-methyl-5-thio-alpha-D-ribose 1-phosphate: step 1/6. Catalyzes the interconversion of methylthioribose-1-phosphate (MTR-1-P) into methylthioribulose-1-phosphate (MTRu-1-P). The polypeptide is Methylthioribose-1-phosphate isomerase (Leptospira biflexa serovar Patoc (strain Patoc 1 / Ames)).